We begin with the raw amino-acid sequence, 114 residues long: Mobility group protein 1A (114 aa).

Positions 5 to 71 (PKRPLSAYML…EYEKAMKEFE (67 aa)) form a DNA-binding region, HMG box. Residues 69–114 (EFERNGGDKSSGASTKKRGKAAEKKKPAKKSKKKDSEDDEEEDESD) are disordered. Positions 105-114 (EDDEEEDESD) are enriched in acidic residues.

Belongs to the HMGB family.

The protein resides in the nucleus. It localises to the chromosome. Its function is as follows. Found in condensed chromomeres. Binds preferentially to AT-rich DNA. The sequence is that of Mobility group protein 1A (HMG1A) from Chironomus tentans (Midge).